Here is an 882-residue protein sequence, read N- to C-terminus: Translation initiation factor IF-2 (882 aa).

The disordered stretch occupies residues Ile38 to Asn294. Basic and acidic residues-rich tracts occupy residues Thr66–Gly76, Gly109–Ser128, and Pro207–Arg219. Residues Pro282–Lys292 show a composition bias toward basic residues. Residues Ala383–Asp556 form the tr-type G domain. Residues Gly392 to Thr399 form a G1 region. Gly392–Thr399 is a GTP binding site. Positions Gly417–His421 are G2. Residues Asp438–Gly441 are G3. GTP contacts are provided by residues Asp438–His442 and Asn492–Asp495. The segment at Asn492–Asp495 is G4. Residues Ser528–Lys530 form a G5 region.

It belongs to the TRAFAC class translation factor GTPase superfamily. Classic translation factor GTPase family. IF-2 subfamily.

It is found in the cytoplasm. Functionally, one of the essential components for the initiation of protein synthesis. Protects formylmethionyl-tRNA from spontaneous hydrolysis and promotes its binding to the 30S ribosomal subunits. Also involved in the hydrolysis of GTP during the formation of the 70S ribosomal complex. The protein is Translation initiation factor IF-2 of Syntrophomonas wolfei subsp. wolfei (strain DSM 2245B / Goettingen).